Consider the following 136-residue polypeptide: Preprocaerulein type I' (136 aa).

The N-terminal stretch at 1-26 (MFKGILLCVLFAVLSANPLSQPEGFA) is a signal peptide. The propeptide occupies 27 to 136 (DEERDVRGLA…NALGGAPQQR (110 aa)). Residues 82 to 101 (GAPQQREANDERRFADDEDD) are disordered.

Belongs to the gastrin/cholecystokinin family. In terms of tissue distribution, expressed by the skin glands.

It localises to the secreted. The pharmacological activities of caerulein are quite similar to the physiological activities of gastrin and related peptides. This chain is Preprocaerulein type I', found in Xenopus laevis (African clawed frog).